Reading from the N-terminus, the 555-residue chain is Methionine--tRNA ligase (555 aa).

A 'HIGH' region motif is present at residues 13–23 (PYANGSLHIGH). The Zn(2+) site is built by Cys-144, Cys-147, Cys-157, and Cys-160. Residues 330-334 (KISKS) carry the 'KMSKS' region motif. Lys-333 is an ATP binding site.

This sequence belongs to the class-I aminoacyl-tRNA synthetase family. MetG type 1 subfamily. In terms of assembly, monomer. Zn(2+) is required as a cofactor.

The protein localises to the cytoplasm. The enzyme catalyses tRNA(Met) + L-methionine + ATP = L-methionyl-tRNA(Met) + AMP + diphosphate. In terms of biological role, is required not only for elongation of protein synthesis but also for the initiation of all mRNA translation through initiator tRNA(fMet) aminoacylation. The polypeptide is Methionine--tRNA ligase (Blochmanniella pennsylvanica (strain BPEN)).